The following is a 196-amino-acid chain: MSYYAFEGLIPVVHPTAFVHPSAVLIGDVIVGAGVYIGPLASLRGDYGRLIVQAGANIQDGCIMHGYCDTDTIVGENGHIGHGAILHGCVIGRDALVGMNSVIMDGAVIGEESIVAAMSFVKAGFSGEKRQLLMGTPARAVRSVSDDELHWKRLNTKEYQDLVGRCHASLHETQPLRQMEENRPRLQGTTDVTPKR.

A disordered region spans residues 173 to 196; the sequence is TQPLRQMEENRPRLQGTTDVTPKR. A compositionally biased stretch (polar residues) spans 187–196; the sequence is QGTTDVTPKR.

The protein belongs to the transferase hexapeptide repeat family.

It functions in the pathway amine and polyamine metabolism; carnitine metabolism. In terms of biological role, overproduction of CaiE stimulates the activity of CaiB and CaiD. This is Carnitine operon protein CaiE from Shigella flexneri serotype 5b (strain 8401).